Consider the following 54-residue polypeptide: Ovomucoid (54 aa).

The Kazal-like domain occupies Val-4–Cys-54. 3 disulfide bridges follow: Cys-6–Cys-36, Cys-14–Cys-33, and Cys-22–Cys-54. Asn-43 carries N-linked (GlcNAc...) asparagine glycosylation.

It is found in the secreted. In Dendrocygna viduata (White-faced whistling-duck), this protein is Ovomucoid.